The primary structure comprises 693 residues: TBC1 domain family member 12 (693 aa).

Position 1 is an N-acetylmethionine (Met-1). Disordered stretches follow at residues 1 to 57, 91 to 120, and 156 to 229; these read MMGP…EAPP, RGSG…RRTC, and AAGD…TTVR. A compositionally biased stretch (low complexity) spans 40–49; that stretch reads GAVAAEPPGE. Over residues 106-115 the composition is skewed to basic and acidic residues; the sequence is QDRRGPEEAR. Phosphoserine is present on residues Ser-202 and Ser-233. Residues 402–610 form the Rab-GAP TBC domain; that stretch reads GLPPSVRGKV…RVWDVFCRDG (209 aa).

As to quaternary structure, interacts with RAB11A; this interaction recruits TBC1D12 to RAB11A-positive recycling endosomes.

It localises to the endosome. RAB11A-binding protein that plays a role in neurite outgrowth. This Rattus norvegicus (Rat) protein is TBC1 domain family member 12 (Tbc1d12).